A 329-amino-acid polypeptide reads, in one-letter code: 4-hydroxythreonine-4-phosphate dehydrogenase (329 aa).

Residues His136 and Thr137 each contribute to the substrate site. Residues His166, His211, and His266 each contribute to the a divalent metal cation site. Positions 274, 283, and 292 each coordinate substrate.

This sequence belongs to the PdxA family. Homodimer. Zn(2+) is required as a cofactor. Mg(2+) serves as cofactor. It depends on Co(2+) as a cofactor.

Its subcellular location is the cytoplasm. The enzyme catalyses 4-(phosphooxy)-L-threonine + NAD(+) = 3-amino-2-oxopropyl phosphate + CO2 + NADH. Its pathway is cofactor biosynthesis; pyridoxine 5'-phosphate biosynthesis; pyridoxine 5'-phosphate from D-erythrose 4-phosphate: step 4/5. In terms of biological role, catalyzes the NAD(P)-dependent oxidation of 4-(phosphooxy)-L-threonine (HTP) into 2-amino-3-oxo-4-(phosphooxy)butyric acid which spontaneously decarboxylates to form 3-amino-2-oxopropyl phosphate (AHAP). The sequence is that of 4-hydroxythreonine-4-phosphate dehydrogenase from Salmonella arizonae (strain ATCC BAA-731 / CDC346-86 / RSK2980).